We begin with the raw amino-acid sequence, 394 residues long: NAD(P)H-quinone oxidoreductase subunit H (394 aa).

This sequence belongs to the complex I 49 kDa subunit family. As to quaternary structure, NDH-1 can be composed of about 15 different subunits; different subcomplexes with different compositions have been identified which probably have different functions.

It localises to the cellular thylakoid membrane. It carries out the reaction a plastoquinone + NADH + (n+1) H(+)(in) = a plastoquinol + NAD(+) + n H(+)(out). The enzyme catalyses a plastoquinone + NADPH + (n+1) H(+)(in) = a plastoquinol + NADP(+) + n H(+)(out). NDH-1 shuttles electrons from an unknown electron donor, via FMN and iron-sulfur (Fe-S) centers, to quinones in the respiratory and/or the photosynthetic chain. The immediate electron acceptor for the enzyme in this species is believed to be plastoquinone. Couples the redox reaction to proton translocation, and thus conserves the redox energy in a proton gradient. Cyanobacterial NDH-1 also plays a role in inorganic carbon-concentration. The protein is NAD(P)H-quinone oxidoreductase subunit H of Synechococcus sp. (strain CC9605).